The following is a 105-amino-acid chain: uncharacterized protein (105 aa).

The protein localises to the plastid. This is an uncharacterized protein from Euglena longa (Euglenophycean alga).